The primary structure comprises 278 residues: S-formylglutathione hydrolase YeiG (278 aa).

Active-site charge relay system residues include Ser145, Asp223, and His256.

It belongs to the esterase D family.

It carries out the reaction S-formylglutathione + H2O = formate + glutathione + H(+). Its function is as follows. Serine hydrolase involved in the detoxification of formaldehyde. Hydrolyzes S-formylglutathione to glutathione and formate. The sequence is that of S-formylglutathione hydrolase YeiG (yeiG) from Escherichia coli O139:H28 (strain E24377A / ETEC).